The primary structure comprises 106 residues: Large ribosomal subunit protein eL42 (106 aa).

A disordered region spans residues 34-53; it reads YAQGRRRYDRKRSGYGGQTK. At K53 the chain carries N6-methyllysine.

The protein belongs to the eukaryotic ribosomal protein eL42 family.

The protein resides in the cytoplasm. The protein is Large ribosomal subunit protein eL42 (RPL36AL) of Pongo abelii (Sumatran orangutan).